The chain runs to 447 residues: ATP-dependent protease ATPase subunit HslU (447 aa).

Residues Ile18, 60–65 (GVGKTE), Asp259, Glu325, and Arg397 each bind ATP.

This sequence belongs to the ClpX chaperone family. HslU subfamily. In terms of assembly, a double ring-shaped homohexamer of HslV is capped on each side by a ring-shaped HslU homohexamer. The assembly of the HslU/HslV complex is dependent on binding of ATP.

The protein localises to the cytoplasm. ATPase subunit of a proteasome-like degradation complex; this subunit has chaperone activity. The binding of ATP and its subsequent hydrolysis by HslU are essential for unfolding of protein substrates subsequently hydrolyzed by HslV. HslU recognizes the N-terminal part of its protein substrates and unfolds these before they are guided to HslV for hydrolysis. This Burkholderia ambifaria (strain MC40-6) protein is ATP-dependent protease ATPase subunit HslU.